Consider the following 370-residue polypeptide: MIRIAVDAMGGDIGPDVTLAASLAFLQAHPDAELLLVGQPEVLAAHSLHAQLVAHARCEIVAASEVVTMDDSIEIALRRKKNSSMRVAINQVKEGRAQVAVSGGNTGALMAIARYVLKTLEGIDRPAIASQLPNARGKATTMLDLGANVDCTEEHLLQFAVMGSALVAAIAEIPSPTVGLLNIGEEAIKGGDMIKKAGRLLRAASDSGDINFYGNVEGNDIFKGTTDLVVCDGFVGNVALKSSEGLAHMIGDYIKAEFSRNLLTKMAALVAYPVLSAFKKRFDHRRYNGAALLGLRGLVFKSHGSADVFAFEQALSRAYDAARNNLLERVRERIAHAAPLLVAARAALPAEEALAAPFMSVESTVSTPAH.

It belongs to the PlsX family. As to quaternary structure, homodimer. Probably interacts with PlsY.

The protein resides in the cytoplasm. It catalyses the reaction a fatty acyl-[ACP] + phosphate = an acyl phosphate + holo-[ACP]. It participates in lipid metabolism; phospholipid metabolism. In terms of biological role, catalyzes the reversible formation of acyl-phosphate (acyl-PO(4)) from acyl-[acyl-carrier-protein] (acyl-ACP). This enzyme utilizes acyl-ACP as fatty acyl donor, but not acyl-CoA. The protein is Phosphate acyltransferase of Polaromonas naphthalenivorans (strain CJ2).